We begin with the raw amino-acid sequence, 388 residues long: UDP-4-amino-4-deoxy-L-arabinose--oxoglutarate aminotransferase (388 aa).

Lys183 carries the N6-(pyridoxal phosphate)lysine modification.

This sequence belongs to the DegT/DnrJ/EryC1 family. ArnB subfamily. Homodimer. The cofactor is pyridoxal 5'-phosphate.

The catalysed reaction is UDP-4-amino-4-deoxy-beta-L-arabinose + 2-oxoglutarate = UDP-beta-L-threo-pentopyranos-4-ulose + L-glutamate. Its pathway is nucleotide-sugar biosynthesis; UDP-4-deoxy-4-formamido-beta-L-arabinose biosynthesis; UDP-4-deoxy-4-formamido-beta-L-arabinose from UDP-alpha-D-glucuronate: step 2/3. It participates in bacterial outer membrane biogenesis; lipopolysaccharide biosynthesis. Its function is as follows. Catalyzes the conversion of UDP-4-keto-arabinose (UDP-Ara4O) to UDP-4-amino-4-deoxy-L-arabinose (UDP-L-Ara4N). The modified arabinose is attached to lipid A and is required for resistance to polymyxin and cationic antimicrobial peptides. The sequence is that of UDP-4-amino-4-deoxy-L-arabinose--oxoglutarate aminotransferase from Shewanella sediminis (strain HAW-EB3).